The following is a 546-amino-acid chain: Chaperonin GroEL (546 aa).

Residues 30-33 (TLGP), Lys-51, 87-91 (DGTTT), Gly-415, 479-481 (NAA), and Asp-495 contribute to the ATP site. A disordered region spans residues 525 to 546 (PEPKKDMPPMPGGGMGGMGGMY). Positions 536–546 (GGGMGGMGGMY) are enriched in gly residues.

This sequence belongs to the chaperonin (HSP60) family. As to quaternary structure, forms a cylinder of 14 subunits composed of two heptameric rings stacked back-to-back. Interacts with the co-chaperonin GroES.

Its subcellular location is the cytoplasm. The enzyme catalyses ATP + H2O + a folded polypeptide = ADP + phosphate + an unfolded polypeptide.. Functionally, together with its co-chaperonin GroES, plays an essential role in assisting protein folding. The GroEL-GroES system forms a nano-cage that allows encapsulation of the non-native substrate proteins and provides a physical environment optimized to promote and accelerate protein folding. This Solidesulfovibrio magneticus (strain ATCC 700980 / DSM 13731 / RS-1) (Desulfovibrio magneticus) protein is Chaperonin GroEL.